The primary structure comprises 262 residues: Indole-3-glycerol phosphate synthase (262 aa).

It belongs to the TrpC family.

It catalyses the reaction 1-(2-carboxyphenylamino)-1-deoxy-D-ribulose 5-phosphate + H(+) = (1S,2R)-1-C-(indol-3-yl)glycerol 3-phosphate + CO2 + H2O. It participates in amino-acid biosynthesis; L-tryptophan biosynthesis; L-tryptophan from chorismate: step 4/5. The sequence is that of Indole-3-glycerol phosphate synthase from Clostridium kluyveri (strain NBRC 12016).